Here is a 436-residue protein sequence, read N- to C-terminus: Phosphoribosylamine--glycine ligase (436 aa).

The ATP-grasp domain occupies Arg106–Asp318. Residue Met133 to Thr196 participates in ATP binding. Positions 276, 288, and 290 each coordinate Mg(2+). Positions 276, 288, and 290 each coordinate Mn(2+).

This sequence belongs to the GARS family. Requires Mg(2+) as cofactor. Mn(2+) is required as a cofactor.

It catalyses the reaction 5-phospho-beta-D-ribosylamine + glycine + ATP = N(1)-(5-phospho-beta-D-ribosyl)glycinamide + ADP + phosphate + H(+). The protein operates within purine metabolism; IMP biosynthesis via de novo pathway; N(1)-(5-phospho-D-ribosyl)glycinamide from 5-phospho-alpha-D-ribose 1-diphosphate: step 2/2. In Methanothermobacter thermautotrophicus (strain ATCC 29096 / DSM 1053 / JCM 10044 / NBRC 100330 / Delta H) (Methanobacterium thermoautotrophicum), this protein is Phosphoribosylamine--glycine ligase.